The sequence spans 188 residues: Der GTPase-activating protein YihI (188 aa).

Disordered stretches follow at residues 1–80 (MKQP…VPVP) and 162–188 (DEDD…KDTF). A compositionally biased stretch (basic and acidic residues) spans 27–37 (TRDELDAEARD). The span at 47 to 57 (NRSGARTNVEG) shows a compositional bias: polar residues.

It belongs to the YihI family. In terms of assembly, interacts with Der.

Its function is as follows. A GTPase-activating protein (GAP) that modifies Der/EngA GTPase function. May play a role in ribosome biogenesis. This chain is Der GTPase-activating protein YihI, found in Yersinia pseudotuberculosis serotype O:3 (strain YPIII).